Here is a 397-residue protein sequence, read N- to C-terminus: DnaJ homolog subfamily A member 4 (397 aa).

One can recognise a J domain in the interval 4-70 (ETQYYDILGV…RDVYDQGGEQ (67 aa)). A Phosphoserine modification is found at Ser-18. The CR-type zinc finger occupies 122–206 (GVTKKLALQK…CSGAKVIREK (85 aa)). The Zn(2+) site is built by Cys-135, Cys-138, Cys-151, Cys-154, Cys-178, Cys-181, Cys-194, and Cys-197. 4 CXXCXGXG motif repeats span residues 135–142 (CEKCEGVG), 151–158 (CPLCKGRG), 178–185 (CIECKGQG), and 194–201 (CESCSGAK). Cys-394 is subject to Cysteine methyl ester. Residue Cys-394 is the site of S-farnesyl cysteine attachment. The propeptide at 395-397 (QTA) is removed in mature form.

The protein localises to the membrane. In Homo sapiens (Human), this protein is DnaJ homolog subfamily A member 4 (DNAJA4).